The chain runs to 605 residues: Arginine--tRNA ligase (605 aa).

The short motif at 131 to 141 (ANPTGPMHVGH) is the 'HIGH' region element. A disordered region spans residues 290–309 (PPPKSKKGQPAPAQAASNSA). Low complexity predominate over residues 298-309 (QPAPAQAASNSA).

It belongs to the class-I aminoacyl-tRNA synthetase family. Monomer.

It localises to the cytoplasm. It carries out the reaction tRNA(Arg) + L-arginine + ATP = L-arginyl-tRNA(Arg) + AMP + diphosphate. The chain is Arginine--tRNA ligase from Anaeromyxobacter sp. (strain Fw109-5).